We begin with the raw amino-acid sequence, 311 residues long: Aspartate carbamoyltransferase catalytic subunit (311 aa).

Carbamoyl phosphate contacts are provided by Arg59 and Thr60. Lys87 serves as a coordination point for L-aspartate. Positions 109, 139, and 142 each coordinate carbamoyl phosphate. Arg172 and Arg224 together coordinate L-aspartate. 2 residues coordinate carbamoyl phosphate: Ala265 and Pro266.

Belongs to the aspartate/ornithine carbamoyltransferase superfamily. ATCase family. In terms of assembly, heterododecamer (2C3:3R2) of six catalytic PyrB chains organized as two trimers (C3), and six regulatory PyrI chains organized as three dimers (R2).

The catalysed reaction is carbamoyl phosphate + L-aspartate = N-carbamoyl-L-aspartate + phosphate + H(+). The protein operates within pyrimidine metabolism; UMP biosynthesis via de novo pathway; (S)-dihydroorotate from bicarbonate: step 2/3. Functionally, catalyzes the condensation of carbamoyl phosphate and aspartate to form carbamoyl aspartate and inorganic phosphate, the committed step in the de novo pyrimidine nucleotide biosynthesis pathway. This chain is Aspartate carbamoyltransferase catalytic subunit, found in Streptococcus pyogenes serotype M1.